Here is a 94-residue protein sequence, read N- to C-terminus: Large ribosomal subunit protein uL23 (94 aa).

It belongs to the universal ribosomal protein uL23 family. As to quaternary structure, part of the 50S ribosomal subunit. Contacts protein L29, and trigger factor when it is bound to the ribosome.

In terms of biological role, one of the early assembly proteins it binds 23S rRNA. One of the proteins that surrounds the polypeptide exit tunnel on the outside of the ribosome. Forms the main docking site for trigger factor binding to the ribosome. The polypeptide is Large ribosomal subunit protein uL23 (Pelobacter propionicus (strain DSM 2379 / NBRC 103807 / OttBd1)).